A 436-amino-acid chain; its full sequence is Trigger factor (436 aa).

The PPIase FKBP-type domain occupies Gly162 to Pro247.

Belongs to the FKBP-type PPIase family. Tig subfamily.

The protein localises to the cytoplasm. The enzyme catalyses [protein]-peptidylproline (omega=180) = [protein]-peptidylproline (omega=0). Functionally, involved in protein export. Acts as a chaperone by maintaining the newly synthesized protein in an open conformation. Functions as a peptidyl-prolyl cis-trans isomerase. This is Trigger factor from Neisseria meningitidis serogroup C (strain 053442).